We begin with the raw amino-acid sequence, 415 residues long: Amino acid decarboxylase lolD2 (415 aa).

Lysine 62 is subject to N6-(pyridoxal phosphate)lysine. Pyridoxal 5'-phosphate-binding positions include serine 194, glycine 231, and 266-269 (EPGT). 315-316 (IV) contacts substrate. Catalysis depends on cysteine 351, which acts as the Proton donor; shared with dimeric partner. Cysteine 351 bears the S-nitrosocysteine mark. Aspartate 352 serves as a coordination point for substrate. A pyridoxal 5'-phosphate-binding site is contributed by tyrosine 381.

This sequence belongs to the Orn/Lys/Arg decarboxylase class-II family. In terms of assembly, homodimer. Pyridoxal 5'-phosphate serves as cofactor.

Its pathway is alkaloid biosynthesis. Functionally, amino acid decarboxylase; part of the gene cluster that mediates the biosynthesis of loline alkaloids, potent insecticidal agents composed of a pyrrolizidine ring system and an uncommon ether bridge linking carbons 2 and 7. Lolines are structurally differentiated by the various modifications of the L-amino group and include norloline, loline, N-methylloline, N-acetylloline, N-acetylnorloline, and N-formylloline. The first committed step is the condensation of O-acetyl-L-homoserine (derived from L-aspartic acid) and L-proline, probably catalyzed by the gamma-type pyridoxal 5'-phosphate(PLP)-dependent enzyme lolC, to give the diamino diacid, NACPP. Ensuing cyclization, decarboxylation, and acetylation steps yield 1-exo-acetamidopyrrolizidine (AcAP). LolO is required for installation of the ether bridge upon the pathway intermediate, 1-exo-acetamidopyrrolizidine (AcAP). In sequential 2-oxoglutarate- and O(2)-consuming steps, lolO removes hydrogens from C2 and C7 of AcAP to form both carbon-oxygen bonds in N-acetylnorloline (NANL), the precursor to all other lolines. The enzymes lolD, lolE, lolF and lolT have also been proposed to be involved in the ether-bridge installation. Further processing of the exocyclic moiety of NANL by fungal N-acetamidase (LolN), methyltransferase (LolM), and cytochrome P450 (LolP) enzymes, with occasional involvement of a plant acetyltransferase, generates the other known lolines. LolN transforms NANL to norlonine which is monomethylated and dimethylated to respectively lonine and N-methyllonine (NML) by lolM. LolP catalyzes hydroxylation of the methyl group in N-methylloline (NML) and further oxygenation to N-formylloline (NFL). A plant acetyltransferase is responsible for the acetylation of loline to form N-acetylloline (NAL). LolA might interact with aspartate kinase to prevent feedback inhibition of its activity by these end products and thereby promote production of L-homoserine from L-aspartate. The polypeptide is Amino acid decarboxylase lolD2 (Epichloe uncinata (Endophyte fungus)).